The primary structure comprises 570 residues: Sulfite reductase [NADPH] hemoprotein beta-component (570 aa).

Residues C434, C440, C479, and C483 each coordinate [4Fe-4S] cluster. Position 483 (C483) interacts with siroheme.

The protein belongs to the nitrite and sulfite reductase 4Fe-4S domain family. Alpha(8)-beta(8). The alpha component is a flavoprotein, the beta component is a hemoprotein. The cofactor is siroheme. [4Fe-4S] cluster is required as a cofactor.

The catalysed reaction is hydrogen sulfide + 3 NADP(+) + 3 H2O = sulfite + 3 NADPH + 4 H(+). It participates in sulfur metabolism; hydrogen sulfide biosynthesis; hydrogen sulfide from sulfite (NADPH route): step 1/1. Functionally, component of the sulfite reductase complex that catalyzes the 6-electron reduction of sulfite to sulfide. This is one of several activities required for the biosynthesis of L-cysteine from sulfate. The sequence is that of Sulfite reductase [NADPH] hemoprotein beta-component from Escherichia coli (strain ATCC 8739 / DSM 1576 / NBRC 3972 / NCIMB 8545 / WDCM 00012 / Crooks).